Consider the following 416-residue polypeptide: Adenylosuccinate synthetase (416 aa).

GTP is bound by residues 12–18 (GDEGKGK) and 40–42 (GHT). Residue D13 is the Proton acceptor of the active site. 2 residues coordinate Mg(2+): D13 and G40. IMP contacts are provided by residues 13–16 (DEGK), 38–41 (NAGH), T125, R139, Q220, T235, and R299. Catalysis depends on H41, which acts as the Proton donor. Residue 295–301 (TTTGRPR) participates in substrate binding. GTP is bound by residues R301, 327-329 (KLD), and 405-407 (STS).

This sequence belongs to the adenylosuccinate synthetase family. Homodimer. The cofactor is Mg(2+).

It localises to the cytoplasm. It catalyses the reaction IMP + L-aspartate + GTP = N(6)-(1,2-dicarboxyethyl)-AMP + GDP + phosphate + 2 H(+). The protein operates within purine metabolism; AMP biosynthesis via de novo pathway; AMP from IMP: step 1/2. Functionally, plays an important role in the de novo pathway of purine nucleotide biosynthesis. Catalyzes the first committed step in the biosynthesis of AMP from IMP. This is Adenylosuccinate synthetase from Nitratiruptor sp. (strain SB155-2).